We begin with the raw amino-acid sequence, 49 residues long: Large ribosomal subunit protein bL33 (49 aa).

Belongs to the bacterial ribosomal protein bL33 family.

The chain is Large ribosomal subunit protein bL33 from Pseudothermotoga lettingae (strain ATCC BAA-301 / DSM 14385 / NBRC 107922 / TMO) (Thermotoga lettingae).